A 402-amino-acid chain; its full sequence is Enoyl-[acyl-carrier-protein] reductase [NADH] (402 aa).

NAD(+) is bound by residues 48 to 53, 74 to 75, 111 to 112, and 140 to 141; these read GASSGY, FE, DA, and LA. Tyrosine 226 is a substrate binding site. Residue tyrosine 236 is the Proton donor of the active site. Residues lysine 245 and 274–276 contribute to the NAD(+) site; that span reads VVT.

It belongs to the TER reductase family. As to quaternary structure, monomer.

The enzyme catalyses a 2,3-saturated acyl-[ACP] + NAD(+) = a (2E)-enoyl-[ACP] + NADH + H(+). It participates in lipid metabolism; fatty acid biosynthesis. Involved in the final reduction of the elongation cycle of fatty acid synthesis (FAS II). Catalyzes the reduction of a carbon-carbon double bond in an enoyl moiety that is covalently linked to an acyl carrier protein (ACP). The polypeptide is Enoyl-[acyl-carrier-protein] reductase [NADH] (Xanthomonas campestris pv. campestris (strain 8004)).